We begin with the raw amino-acid sequence, 193 residues long: Urease accessory protein UreE (193 aa).

The tract at residues 138–193 (RGAYHSHGAHSHDQGHAAHDHGNEHKHDHGHDHVHGPGCDHDHDHDHGHHHDHKHD) is disordered. Residues 147 to 193 (HSHDQGHAAHDHGNEHKHDHGHDHVHGPGCDHDHDHDHGHHHDHKHD) are compositionally biased toward basic and acidic residues.

This sequence belongs to the UreE family.

The protein localises to the cytoplasm. Its function is as follows. Involved in urease metallocenter assembly. Binds nickel. Probably functions as a nickel donor during metallocenter assembly. The sequence is that of Urease accessory protein UreE from Rhizobium leguminosarum bv. trifolii (strain WSM2304).